Here is a 170-residue protein sequence, read N- to C-terminus: Peroxidase 2 (170 aa).

N-linked (GlcNAc...) asparagine glycosylation is present at N9. Residue H24 coordinates heme b. T25 lines the Ca(2+) pocket. Cysteines 31 and 59 form a disulfide. The Ca(2+) site is built by D73, T76, and D81.

This sequence belongs to the peroxidase family. Classical plant (class III) peroxidase subfamily. It depends on Ca(2+) as a cofactor. Heme b is required as a cofactor.

The catalysed reaction is 2 a phenolic donor + H2O2 = 2 a phenolic radical donor + 2 H2O. Its function is as follows. Removal of H(2)O(2), oxidation of toxic reductants, biosynthesis and degradation of lignin, suberization, auxin catabolism, response to environmental stresses such as wounding, pathogen attack and oxidative stress. These functions might be dependent on each isozyme/isoform in each plant tissue. In terms of biological role, involved in defense response to powdery meldew fungus. The chain is Peroxidase 2 from Hordeum vulgare (Barley).